We begin with the raw amino-acid sequence, 331 residues long: Adenine deaminase (331 aa).

Positions 17, 19, and 197 each coordinate Zn(2+). Glu200 functions as the Proton donor in the catalytic mechanism. Position 278 (Asp278) interacts with Zn(2+). Asp279 contacts substrate.

It belongs to the metallo-dependent hydrolases superfamily. Adenosine and AMP deaminases family. Adenine deaminase type 2 subfamily. The cofactor is Zn(2+).

It catalyses the reaction adenine + H2O + H(+) = hypoxanthine + NH4(+). In terms of biological role, catalyzes the hydrolytic deamination of adenine to hypoxanthine. Plays an important role in the purine salvage pathway and in nitrogen catabolism. This is Adenine deaminase from Wolinella succinogenes (strain ATCC 29543 / DSM 1740 / CCUG 13145 / JCM 31913 / LMG 7466 / NCTC 11488 / FDC 602W) (Vibrio succinogenes).